The primary structure comprises 358 residues: Testis-specific serine/threonine-protein kinase 2 (358 aa).

The Protein kinase domain maps to 12-272; sequence YIVGINLGKG…IDEILSHSWL (261 aa). Residues 18 to 26 and Lys41 contribute to the ATP site; that span reads LGKGSYAKV. Catalysis depends on Asp136, which acts as the Proton acceptor. Basic and acidic residues-rich tracts occupy residues 296–315 and 329–358; these read DCKL…DHKL and NEDR…KAST. Positions 296 to 358 are disordered; sequence DCKLDTRPGS…SGAEVEKAST (63 aa).

It belongs to the protein kinase superfamily. CAMK Ser/Thr protein kinase family. As to quaternary structure, interacts with TSSK1B. Interacts with HSP90; this interaction stabilizes TSSK2. Mg(2+) is required as a cofactor. Autophosphorylated. Post-translationally, ubiquitinated; HSP90 activity negatively regulates ubiquitination and degradation. As to expression, testis-specific. Expressed only in the spermatids postmeiotically at the final stages of cytodifferentiation in the seminiferous tubules (at protein level). Not detected in released sperms in the lumen of the seminiferous tubules. Also present in the epididymal sperm (at protein level).

Its subcellular location is the cytoplasm. The protein localises to the cytoskeleton. It is found in the microtubule organizing center. The protein resides in the centrosome. It localises to the centriole. Its subcellular location is the cytoplasmic vesicle. The protein localises to the secretory vesicle. It is found in the acrosome. The catalysed reaction is L-seryl-[protein] + ATP = O-phospho-L-seryl-[protein] + ADP + H(+). It carries out the reaction L-threonyl-[protein] + ATP = O-phospho-L-threonyl-[protein] + ADP + H(+). With respect to regulation, activated by phosphorylation on Thr-174, potentially by autophosphorylation. Its function is as follows. Testis-specific serine/threonine-protein kinase required during spermatid development. Phosphorylates 'Ser-281' of TSKS and SPAG16. Involved in the late stages of spermatogenesis, during the reconstruction of the cytoplasm. During spermatogenesis, required for the transformation of a ring-shaped structure around the base of the flagellum originating from the chromatoid body. The polypeptide is Testis-specific serine/threonine-protein kinase 2 (Tssk2) (Mus musculus (Mouse)).